Here is a 2476-residue protein sequence, read N- to C-terminus: Transcriptional regulator ATRX (2476 aa).

A Glycyl lysine isopeptide (Lys-Gly) (interchain with G-Cter in SUMO2) cross-link involves residue Lys-10. The disordered stretch occupies residues 24–154 (HSSEESEETC…FRSRSKMKAD (131 aa)). Ser-25 and Ser-34 each carry phosphoserine. Positions 40 to 57 (MNQSTDKICGSGLNSDMM) are enriched in polar residues. A compositionally biased stretch (basic and acidic residues) spans 58–72 (ENNKEEGASTSEKSR). Tyr-89 carries the post-translational modification Phosphotyrosine. Ser-92 is modified (phosphoserine). The span at 98–107 (TDENVNEKAA) shows a compositional bias: basic and acidic residues. Residues 108–121 (TENSENDITMQSLP) show a composition bias toward polar residues. At Ser-111 the chain carries Phosphoserine. Residues 134-154 (NEDKDDFKGPEFRSRSKMKAD) show a composition bias toward basic and acidic residues. Residues Lys-137 and Lys-141 each participate in a glycyl lysine isopeptide (Lys-Gly) (interchain with G-Cter in SUMO2) cross-link. The ADD domain maps to 158–295 (KRGEDGLHGI…LEQLLQQNKK (138 aa)). A GATA-type; atypical zinc finger spans residues 169–205 (SCTACGQQVNHFQKDSIYRHPSLKVLICKNCFKYYMS). Ser-212 bears the Phosphoserine mark. The PHD-type; atypical zinc finger occupies 216–271 (DEQCRWCAEGGNLICCDFCHNAFCKKCILRNLGRKELSTIMDENNQWYCYICQPEP). Lys-298 is covalently cross-linked (Glycyl lysine isopeptide (Lys-Gly) (interchain with G-Cter in SUMO2)). Phosphoserine is present on Ser-315. 3 disordered regions span residues 427–451 (EKNTKDLKSTDAKSETKLGKGEKSY), 466–507 (SVKA…DLDM), and 525–568 (ESAM…NIKS). A Glycyl lysine isopeptide (Lys-Gly) (interchain with G-Cter in SUMO2) cross-link involves residue Lys-439. A compositionally biased stretch (basic and acidic residues) spans 466–494 (SVKAIDGEEQRAHKSTSGEHKGSGRKDGS). Positions 549–559 (ESSSVKLNVSS) are enriched in polar residues. A PxVxL motif motif is present at residues 573–586 (KVRKELFVKLTPVS). Residue Thr-583 is modified to Phosphothreonine. Disordered stretches follow at residues 585-877 (VSLS…GGSI) and 893-1464 (PGVS…GRKK). 7 positions are modified to phosphoserine: Ser-586, Ser-590, Ser-626, Ser-663, Ser-665, Ser-717, and Ser-719. Basic and acidic residues predominate over residues 615–630 (SSEKCRPREEISDHEN). Residues 732–746 (MGHSSSSDTDINEPQ) show a composition bias toward polar residues. Residues Ser-766, Ser-801, Ser-828, Ser-829, Ser-854, Ser-855, and Ser-871 each carry the phosphoserine modification. Positions 819–849 (SVPEKKEEDSSEDEKQGKKVVDNGGHERAKT) are enriched in basic and acidic residues. The span at 899 to 922 (GAEKPSVKEENVNSPEDKRVSKTK) shows a compositional bias: basic and acidic residues. A compositionally biased stretch (basic residues) spans 923 to 937 (EKTKHLRSRQSRKGK). Phosphoserine is present on residues Ser-941 and Ser-953. Positions 943–963 (GTDRFPKKEQSDESSEGEKKQ) are enriched in basic and acidic residues. The span at 964–973 (SRQRPGTKGK) shows a compositional bias: basic residues. Basic and acidic residues predominate over residues 974 to 988 (KAPDLKGETLKREQE). Residue Lys-984 forms a Glycyl lysine isopeptide (Lys-Gly) (interchain with G-Cter in SUMO2) linkage. Ser-991, Ser-992, Ser-993, and Ser-1041 each carry phosphoserine. Residues 1031–1061 (DKSCEKKEELSDSVDKLPGKGDSCDSSEDKK) are compositionally biased toward basic and acidic residues. The segment covering 1062–1074 (TRNRVSLREKKRF) has biased composition (basic residues). The residue at position 1063 (Arg-1063) is a Citrulline. Composition is skewed to basic and acidic residues over residues 1083 to 1096 (KRPECSSSDTEKSL) and 1103 to 1129 (STEKRPKRIDLRERRNSSSKRNTKEVK). The span at 1146 to 1175 (KQKKQRTSAKKKTGNTKEKKRNSLRATPKR) shows a compositional bias: basic residues. An interaction with DAXX region spans residues 1169–1313 (LRATPKRKQV…VNQVNSESDS (145 aa)). Phosphoserine is present on residues Ser-1223, Ser-1224, and Ser-1232. Positions 1246 to 1260 (PENRIAKKMLLEEIK) are enriched in basic and acidic residues. The span at 1265–1276 (SDEDGSSDDEPD) shows a compositional bias: acidic residues. Phosphoserine occurs at positions 1309, 1311, and 1313. Over residues 1321–1332 (PRYRHRLLRHKL) the composition is skewed to basic residues. 2 positions are modified to phosphoserine: Ser-1335 and Ser-1339. Basic and acidic residues-rich tracts occupy residues 1340 to 1355 (GEEKPTKPKEHKEAKG) and 1395 to 1404 (KKAELEENQR). The span at 1406 to 1415 (YKQKKKRRRI) shows a compositional bias: basic residues. A compositionally biased stretch (basic and acidic residues) spans 1416-1436 (KVQEDSSSENKSHSEEDKKEG). Residues 1437–1453 (DEEDEEDEDEDEEDEND) show a composition bias toward acidic residues. Residue Lys-1473 forms a Glycyl lysine isopeptide (Lys-Gly) (interchain with G-Cter in SUMO2) linkage. Ser-1512 carries the post-translational modification Phosphoserine. At Thr-1514 the chain carries Phosphothreonine. The 188-residue stretch at 1566–1753 (KTKKSPGSGC…HCMVNFIKEN (188 aa)) folds into the Helicase ATP-binding domain. An ATP-binding site is contributed by 1579 to 1586 (HCMGLGKT). Residues 1704-1707 (DEGH) carry the DEGH box motif. A phosphoserine mark is found at Ser-1891 and Ser-1898. Residues 1898 to 1982 (SDSDETSKSL…STSNPSSPAP (85 aa)) are disordered. Basic and acidic residues predominate over residues 1902–1913 (ETSKSLSSDEKK). Lys-1965 is covalently cross-linked (Glycyl lysine isopeptide (Lys-Gly) (interchain with G-Cter in SUMO1); alternate). Lys-1965 participates in a covalent cross-link: Glycyl lysine isopeptide (Lys-Gly) (interchain with G-Cter in SUMO2); alternate. Lys-1970 is covalently cross-linked (Glycyl lysine isopeptide (Lys-Gly) (interchain with G-Cter in SUMO2)). Residues 1971–1982 (TTSTSNPSSPAP) are compositionally biased toward low complexity. Ser-1975 and Ser-1979 each carry phosphoserine. The interaction with MECP2 stretch occupies residues 1993–2263 (DAEVLEHSGK…RKAAWAEYEA (271 aa)). The Helicase C-terminal domain occupies 2008–2188 (EILRMAEEIG…ERHFTMNELT (181 aa)). Residue Ser-2203 is modified to Phosphoserine. The segment at 2445-2476 (SVAGGMQPPPLQRAPPPTVRSKNPGPSPGKSM) is disordered. A compositionally biased stretch (pro residues) spans 2451 to 2462 (QPPPLQRAPPPT). Omega-N-methylarginine occurs at positions 2457 and 2464.

This sequence belongs to the SNF2/RAD54 helicase family. In terms of assembly, interacts with DAXX to form the chromatin remodeling complex ATRX:DAXX. Probably binds EZH2. Binds annexin V in a calcium and phosphatidylcholine/phosphatidylserine-dependent manner. Interacts directly with CBX5 via the PxVxL motif. Interacts with RAD50, MRE11 and NBN; indicative for an association with the MRN complex. Interacts with histone MACROH2A1. Interacts with histone H3 peptides methylated at 'Lys-10' with preferences H3K9me3 &gt; H3K9me2 &gt; H3K9me1. Interacts with histone H3 peptides unmethylated at 'Lys-5' (H3K4me0). Interacts with MECP2, SMC1 and SMC3. Interacts with SETDB1, TRIM28 and ZNF274. In terms of processing, citrullinated by PADI4.

It localises to the nucleus. The protein resides in the chromosome. It is found in the telomere. Its subcellular location is the PML body. The catalysed reaction is ATP + H2O = ADP + phosphate + H(+). In terms of biological role, involved in transcriptional regulation and chromatin remodeling. Facilitates DNA replication in multiple cellular environments and is required for efficient replication of a subset of genomic loci. Binds to DNA tandem repeat sequences in both telomeres and euchromatin and in vitro binds DNA quadruplex structures. May help stabilizing G-rich regions into regular chromatin structures by remodeling G4 DNA and incorporating H3.3-containing nucleosomes. Catalytic component of the chromatin remodeling complex ATRX:DAXX which has ATP-dependent DNA translocase activity and catalyzes the replication-independent deposition of histone H3.3 in pericentric DNA repeats outside S-phase and telomeres, and the in vitro remodeling of H3.3-containing nucleosomes. Its heterochromatin targeting is proposed to involve a combinatorial readout of histone H3 modifications (specifically methylation states of H3K9 and H3K4) and association with CBX5. Involved in maintaining telomere structural integrity in embryonic stem cells probably implying recruitment of CBX5 to telomeres. Reports on the involvement in transcriptional regulation of telomeric repeat-containing RNA (TERRA) are conflicting; according is required for its transcriptional repression in embryonic stem cells. Acts as a negative regulator of chromatin incorporation of transcriptionally repressive histone MACROH2A1, particularily at telomeres. Participates in the allele-specific gene expression at the imprinted IGF2/H19 gene locus. On the maternal allele, required for the chromatin occupancy of SMC1 and CTCTF within the H19 imprinting control region (ICR) and involved in esatblishment of histone tails modifications in the ICR. Binds to zinc-finger coding genes with atypical chromatin signatures and regulates its H3K9me3 levels. Forms a complex with ZNF274, TRIM28 and SETDB1 to facilitate the deposition and maintenance of H3K9me3 at the 3' exons of zinc-finger genes. This is Transcriptional regulator ATRX (Atrx) from Mus musculus (Mouse).